The sequence spans 558 residues: Ubiquitin carboxyl-terminal hydrolase 30 homolog (558 aa).

The helical transmembrane segment at 6 to 26 threads the bilayer; the sequence is ILMAAGVTVAAVVGAFVFWGP. The USP domain occupies 39-550; that stretch reads AGLHNFGLTC…PAYLLFYDRG (512 aa). The active-site Nucleophile is the Cys-48. The segment at 267-300 is disordered; it reads LATPMLGGERSSRPRLPQSQQQQDEGLNRRVSSS. Residues 280 to 289 show a composition bias toward low complexity; sequence PRLPQSQQQQ. His-506 (proton acceptor) is an active-site residue.

It belongs to the peptidase C19 family.

It localises to the mitochondrion outer membrane. It catalyses the reaction Thiol-dependent hydrolysis of ester, thioester, amide, peptide and isopeptide bonds formed by the C-terminal Gly of ubiquitin (a 76-residue protein attached to proteins as an intracellular targeting signal).. Deubiquitinating enzyme that acts as a key inhibitor of mitophagy by counteracting the action of parkin (park). This Drosophila melanogaster (Fruit fly) protein is Ubiquitin carboxyl-terminal hydrolase 30 homolog.